Here is a 210-residue protein sequence, read N- to C-terminus: Eukaryotic translation initiation factor 2 subunit gamma (210 aa).

In terms of domain architecture, tr-type G spans 1–196 (IGHVAHGKST…HLVETITPPR (196 aa)). The G1 stretch occupies residues 2 to 9 (GHVAHGKS). GTP is bound at residue 5 to 10 (AHGKST). The segment at 30-34 (NITIK) is G2. A G3 region spans residues 85-88 (DCPG). Residues 141 to 144 (NKID) and 174 to 176 (SAI) contribute to the GTP site. The tract at residues 141 to 144 (NKID) is G4. The tract at residues 174 to 176 (SAI) is G5.

The protein belongs to the TRAFAC class translation factor GTPase superfamily. Classic translation factor GTPase family. EIF2G subfamily. Eukaryotic translation initiation factor 2 eIF2 is a heterotrimeric complex composed of an alpha, a beta and a gamma subunit. The factors eIF-1, eIF-2, eIF-3, TIF5/eIF-5 and methionyl-tRNAi form a multifactor complex (MFC) that may bind to the 40S ribosome.

The protein resides in the cytoplasm. It is found in the cytosol. It catalyses the reaction GTP + H2O = GDP + phosphate + H(+). Functionally, as a subunit of eukaryotic initiation factor 2 eIF2, involved in the early steps of protein synthesis. In the presence of GTP, eIF-2 forms a ternary complex with initiator tRNA Met-tRNAi and then recruits the 40S ribosomal complex and initiation factors eIF-1, eIF-1A and eIF-3 to form the 43S pre-initiation complex (43S PIC), a step that determines the rate of protein translation. The 43S PIC binds to mRNA and scans downstream to the initiation codon, where it forms a 48S initiation complex by codon-anticodon base pairing. This leads to the displacement of eIF-1 to allow GTPase-activating protein (GAP) eIF-5-mediated hydrolysis of eIF2-bound GTP. Hydrolysis of GTP and release of Pi, which makes GTP hydrolysis irreversible, causes the release of the eIF-2-GDP binary complex from the 40S subunit, an event that is essential for the subsequent joining of the 60S ribosomal subunit to form an elongation-competent 80S ribosome. In order for eIF-2 to recycle and catalyze another round of initiation, the GDP bound to eIF-2 must be exchanged with GTP by way of a reaction catalyzed by GDP-GTP exchange factor (GEF) eIF-2B. This is Eukaryotic translation initiation factor 2 subunit gamma from Spironucleus vortens.